The following is a 98-amino-acid chain: PqqA binding protein (98 aa).

Belongs to the PqqD family. In terms of assembly, monomer. Interacts with PqqE.

Its pathway is cofactor biosynthesis; pyrroloquinoline quinone biosynthesis. In terms of biological role, functions as a PqqA binding protein and presents PqqA to PqqE, in the pyrroloquinoline quinone (PQQ) biosynthetic pathway. This Rhizobium meliloti (strain 1021) (Ensifer meliloti) protein is PqqA binding protein.